Here is an 80-residue protein sequence, read N- to C-terminus: FXYD domain-containing ion transport regulator 7 (80 aa).

The Extracellular segment spans residues Met-1–Asn-23. O-linked (GlcNAc) threonine glycosylation is found at Thr-3, Thr-5, and Thr-9. The chain crosses the membrane as a helical span at residues Thr-24 to Ser-46. Residues Lys-47–Val-80 lie on the Cytoplasmic side of the membrane. The disordered stretch occupies residues Ala-54–Val-80. Phosphoserine is present on Ser-73.

This sequence belongs to the FXYD family. As to quaternary structure, regulatory subunit of the sodium/potassium-transporting ATPase which is composed of a catalytic alpha subunit, a non-catalytic beta subunit and a FXYD regulatory unit that modulates the enzymatic activity in a tissue- and isoform-specific way by changing affinities of the Na+/K+-ATPase toward Na(+), K(+) or ATP. Post-translationally, O-glycosylated; required for stabilization and translocation to the plasma membrane.

It is found in the cell membrane. Associates with and regulates the activity of the sodium/potassium-transporting ATPase (NKA) which catalyzes the hydrolysis of ATP coupled with the exchange of Na(+) and K(+) ions across the plasma membrane. Reduces the apparent affinity for external K(+), an effect that depends on the presence of external Na(+) and voltage. Increases the apparent affinity for intracellular Na(+). The sequence is that of FXYD domain-containing ion transport regulator 7 (FXYD7) from Homo sapiens (Human).